The following is a 153-amino-acid chain: uncharacterized protein (153 aa).

The tract at residues 72–98 (LPISKTNDAERSQQTTKAPVMERTESS) is disordered.

The protein localises to the cytoplasm. It localises to the nucleus. This is an uncharacterized protein from Schizosaccharomyces pombe (strain 972 / ATCC 24843) (Fission yeast).